Here is a 270-residue protein sequence, read N- to C-terminus: L-aspartate dehydrogenase (270 aa).

NAD(+) is bound by residues Ala123 and Asn191. His221 is an active-site residue.

It belongs to the L-aspartate dehydrogenase family.

The catalysed reaction is L-aspartate + NADP(+) + H2O = oxaloacetate + NH4(+) + NADPH + H(+). The enzyme catalyses L-aspartate + NAD(+) + H2O = oxaloacetate + NH4(+) + NADH + H(+). Its pathway is cofactor biosynthesis; NAD(+) biosynthesis; iminoaspartate from L-aspartate (dehydrogenase route): step 1/1. Functionally, specifically catalyzes the NAD or NADP-dependent dehydrogenation of L-aspartate to iminoaspartate. The polypeptide is L-aspartate dehydrogenase (Methanocella arvoryzae (strain DSM 22066 / NBRC 105507 / MRE50)).